We begin with the raw amino-acid sequence, 497 residues long: tRNA (adenine(58)-N(1))-methyltransferase non-catalytic subunit TRM6 (497 aa).

The tract at residues 81 to 103 is disordered; it reads LEEPASETKEAGTDNRNIVDDGK. A substrate region spans residues 95 to 105; sequence NRNIVDDGKSQ. Phosphothreonine is present on threonine 108. Substrate stretches follow at residues 146–155 and 176–183; these read KYIKKKKKKY and REPGKINH. The interval 275 to 354 is disordered; sequence MLSSEPKDST…EKQRRQEEQR (80 aa). Positions 289–307 are enriched in acidic residues; it reads SNGELEEKEIAEQADEDNI. The span at 328-354 shows a compositional bias: basic and acidic residues; the sequence is PENKEPKEKRSKRDYIQEKQRRQEEQR. Residues arginine 349 and arginine 377 each coordinate substrate. Substrate regions lie at residues 415–423 and 434–441; these read RERGGVINL and QVLPDRSH. Residues 474-497 are disordered; the sequence is TGALDPHKAEEPAAKKQKCMESAS. Residues 478 to 487 show a composition bias toward basic and acidic residues; it reads DPHKAEEPAA.

This sequence belongs to the TRM6/GCD10 family. Heterotetramer; composed of two copies of TRMT6 and two copies of TRMT61A.

The protein resides in the nucleus. Substrate-binding subunit of tRNA (adenine-N(1)-)-methyltransferase, which catalyzes the formation of N(1)-methyladenine at position 58 (m1A58) in initiator methionyl-tRNA. Together with the TRMT61A catalytic subunit, part of a mRNA N(1)-methyltransferase complex that mediates methylation of adenosine residues at the N(1) position of a small subset of mRNAs: N(1) methylation takes place in tRNA T-loop-like structures of mRNAs and is only present at low stoichiometries. The sequence is that of tRNA (adenine(58)-N(1))-methyltransferase non-catalytic subunit TRM6 (Trmt6) from Mus musculus (Mouse).